A 278-amino-acid polypeptide reads, in one-letter code: GTPase Era (278 aa).

The Era-type G domain occupies 7–168 (YCGYIAIVGK…ENLIYPYLPN (162 aa)). The G1 stretch occupies residues 15–22 (GKPNVGKS). 15–22 (GKPNVGKS) is a GTP binding site. The segment at 41-45 (NTTQK) is G2. Residues 62-65 (DTPG) form a G3 region. GTP is bound by residues 62–66 (DTPGI) and 117–120 (NKID). The interval 117 to 120 (NKID) is G4. Residues 147–149 (ISA) are G5. In terms of domain architecture, KH type-2 spans 199-276 (LRDELPSIIT…YLIIWVKVKI (78 aa)).

It belongs to the TRAFAC class TrmE-Era-EngA-EngB-Septin-like GTPase superfamily. Era GTPase family. As to quaternary structure, monomer.

It localises to the cytoplasm. It is found in the cell membrane. An essential GTPase that binds both GDP and GTP, with rapid nucleotide exchange. Plays a role in 16S rRNA processing and 30S ribosomal subunit biogenesis and possibly also in cell cycle regulation and energy metabolism. This chain is GTPase Era, found in Buchnera aphidicola subsp. Schizaphis graminum (strain Sg).